Consider the following 478-residue polypeptide: Capsid vertex component 1 (478 aa).

Positions 131–184 are disordered; the sequence is PRGPESEGEGGKDGGAGRGDGEASRESPLERIAAEASGPGPGSGRGRSAGGRRA. Residues 149 to 163 show a composition bias toward basic and acidic residues; the sequence is GDGEASRESPLERIA. Positions 169-179 are enriched in gly residues; the sequence is PGPGSGRGRSA.

This sequence belongs to the herpesviridae CVC1 protein family. Interacts (via C-terminus) with capsid vertex component 2/CVC2.

The protein localises to the virion. It is found in the host nucleus. In terms of biological role, capsid vertex-specific component that plays a role during viral DNA encapsidation, assuring correct genome cleavage and presumably stabilizing capsids that contain full-length viral genomes. This chain is Capsid vertex component 1, found in Equus caballus (Horse).